We begin with the raw amino-acid sequence, 325 residues long: tRNA dimethylallyltransferase (325 aa).

11–18 (GPTASGKS) is an ATP binding site. 13-18 (TASGKS) lines the substrate pocket. 2 interaction with substrate tRNA regions span residues 36–39 (DSMQ) and 160–164 (QRLIR).

It belongs to the IPP transferase family. Monomer. Mg(2+) serves as cofactor.

It catalyses the reaction adenosine(37) in tRNA + dimethylallyl diphosphate = N(6)-dimethylallyladenosine(37) in tRNA + diphosphate. Catalyzes the transfer of a dimethylallyl group onto the adenine at position 37 in tRNAs that read codons beginning with uridine, leading to the formation of N6-(dimethylallyl)adenosine (i(6)A). The protein is tRNA dimethylallyltransferase of Rickettsia canadensis (strain McKiel).